We begin with the raw amino-acid sequence, 85 residues long: MVLLLSMISRCLILIILCYQRYISVFLSPRCRFYPTCSHYAVDALYTFGLLKGLLLIAKRILKCHPFHSGGLNSISIKTKSKREY.

Belongs to the UPF0161 family.

The protein resides in the cell membrane. Functionally, could be involved in insertion of integral membrane proteins into the membrane. This is Putative membrane protein insertion efficiency factor from Buchnera aphidicola subsp. Baizongia pistaciae (strain Bp).